Consider the following 345-residue polypeptide: Methylthioribose-1-phosphate isomerase (345 aa).

Substrate contacts are provided by residues 44-46 (RGA), arginine 87, and glutamine 194. Aspartate 235 serves as the catalytic Proton donor. 245 to 246 (NK) contacts substrate.

The protein belongs to the eIF-2B alpha/beta/delta subunits family. MtnA subfamily.

It catalyses the reaction 5-(methylsulfanyl)-alpha-D-ribose 1-phosphate = 5-(methylsulfanyl)-D-ribulose 1-phosphate. The protein operates within amino-acid biosynthesis; L-methionine biosynthesis via salvage pathway; L-methionine from S-methyl-5-thio-alpha-D-ribose 1-phosphate: step 1/6. Functionally, catalyzes the interconversion of methylthioribose-1-phosphate (MTR-1-P) into methylthioribulose-1-phosphate (MTRu-1-P). This Heliobacterium modesticaldum (strain ATCC 51547 / Ice1) protein is Methylthioribose-1-phosphate isomerase.